Consider the following 147-residue polypeptide: Small nuclear ribonucleoprotein-associated protein B (147 aa).

Positions 1 to 84 constitute a Sm domain; that stretch reads MGTTKMVSLL…IVSLSVQGPP (84 aa). Disordered stretches follow at residues 87-106 and 128-147; these read DPSM…PAGR and APPP…FRPV.

The protein belongs to the snRNP SmB/SmN family. In terms of assembly, belongs to the 40S cdc5-associated complex (or cwf complex), a spliceosome sub-complex reminiscent of a late-stage spliceosome composed of the U2, U5 and U6 snRNAs and at least brr2, cdc5, cwf2/prp3, cwf3/syf1, cwf4/syf3, cwf5/ecm2, spp42/cwf6, cwf7/spf27, cwf8, cwf9, cwf10, cwf11, cwf12, prp45/cwf13, cwf14, cwf15, cwf16, cwf17, cwf18, cwf19, cwf20, cwf21, cwf22, cwf23, cwf24, cwf25, cwf26, cyp7/cwf27, cwf28, cwf29/ist3, lea1, msl1, prp5/cwf1, prp10, prp12/sap130, prp17, prp22, sap61, sap62, sap114, sap145, slu7, smb1, smd1, smd3, smf1, smg1 and syf2.

The protein localises to the nucleus. It is found in the cytoplasm. Its function is as follows. Plays a role in pre-mRNA splicing as a core component of the spliceosomal U1, U2, U4 and U5 small nuclear ribonucleoproteins (snRNPs), the building blocks of the spliceosome. This Schizosaccharomyces pombe (strain 972 / ATCC 24843) (Fission yeast) protein is Small nuclear ribonucleoprotein-associated protein B (smb1).